A 123-amino-acid polypeptide reads, in one-letter code: MENSLFKKSEKKVRRALRVRKVLRGSSLKPRLSVVKTNKHIYVQLIDDSIGKTLASVSTIAKSSKAAGLVKKNQGVAKALGVQIAEIGKSLQVDRVVFDRGPFKYHGIIAMVADGAREGGLQF.

This sequence belongs to the universal ribosomal protein uL18 family. Part of the 50S ribosomal subunit; part of the 5S rRNA/L5/L18/L25 subcomplex. Contacts the 5S and 23S rRNAs.

In terms of biological role, this is one of the proteins that bind and probably mediate the attachment of the 5S RNA into the large ribosomal subunit, where it forms part of the central protuberance. This Chlamydia abortus (strain DSM 27085 / S26/3) (Chlamydophila abortus) protein is Large ribosomal subunit protein uL18.